The sequence spans 122 residues: Large ribosomal subunit protein uL14 (122 aa).

It belongs to the universal ribosomal protein uL14 family. Part of the 50S ribosomal subunit. Forms a cluster with proteins L3 and L19. In the 70S ribosome, L14 and L19 interact and together make contacts with the 16S rRNA in bridges B5 and B8.

Binds to 23S rRNA. Forms part of two intersubunit bridges in the 70S ribosome. This chain is Large ribosomal subunit protein uL14, found in Pelobacter propionicus (strain DSM 2379 / NBRC 103807 / OttBd1).